Reading from the N-terminus, the 489-residue chain is Dentin matrix acidic phosphoprotein 1 (489 aa).

A signal peptide spans 1–16 (MKTVILLTFLWGLSCA). The segment at 22-489 (YQNTESESSE…QDDNDCQDGY (468 aa)) is disordered. The segment covering 82 to 100 (DKEEDEDDSGDDTFGDEDN) has biased composition (acidic residues). A compositionally biased stretch (low complexity) spans 123 to 138 (DTTQSSEDSTSQENSA). 2 stretches are compositionally biased toward basic and acidic residues: residues 143–159 (SDSK…RPEA) and 217–227 (RSEESKGDHEP). The segment covering 263–274 (DSNSRETQSVST) has biased composition (polar residues). Residues 275 to 287 (EDFRSKEESRSET) are compositionally biased toward basic and acidic residues. Residues 316–332 (EPSQESSSESQEGVASE) show a composition bias toward low complexity. Positions 334 to 336 (RGD) match the Cell attachment site motif. Asn-340 is a glycosylation site (N-linked (GlcNAc...) asparagine). Over residues 346–358 (DQRDSESSEEDRL) the composition is skewed to basic and acidic residues. N-linked (GlcNAc...) asparagine glycosylation occurs at Asn-378. Over residues 386-397 (ESQESAQDEDSS) the composition is skewed to acidic residues. The span at 398 to 419 (SQEGLQSQSASRESRSQESQSE) shows a compositional bias: low complexity. Basic and acidic residues predominate over residues 420–442 (QDSRSEENRDSDSQDSSRSKEES). Asn-443 is a glycosylation site (N-linked (GlcNAc...) asparagine). Residues 453 to 478 (EDNHPKNIEADNRKLIVDAYHNKPIG) show a composition bias toward basic and acidic residues. Over residues 479 to 489 (DQDDNDCQDGY) the composition is skewed to acidic residues.

Interacts with importin alpha. Phosphorylated in the cytosol and extracellular matrix and unphosphorylated in the nucleus. Phosphorylation is necessary for nucleocytoplasmic transport and may be catalyzed by a nuclear isoform of CK2 and can be augmented by calcium. Phosphorylated (in vitro) by FAM20C in the extracellular medium at sites within the S-x-E/pS motif. In terms of tissue distribution, expressed in tooth particularly in odontoblast and ameloblast.

It is found in the nucleus. It localises to the cytoplasm. Its subcellular location is the secreted. The protein localises to the extracellular space. The protein resides in the extracellular matrix. Its function is as follows. May have a dual function during osteoblast differentiation. In the nucleus of undifferentiated osteoblasts, unphosphorylated form acts as a transcriptional component for activation of osteoblast-specific genes like osteocalcin. During the osteoblast to osteocyte transition phase it is phosphorylated and exported into the extracellular matrix, where it regulates nucleation of hydroxyapatite. This is Dentin matrix acidic phosphoprotein 1 (Dmp1) from Rattus norvegicus (Rat).